A 478-amino-acid chain; its full sequence is ATP-dependent RNA helicase DDX19A (478 aa).

N-acetylalanine is present on A2. Residues 2-299 (ATDSWALAVD…DPNIIKLKRE (298 aa)) form an N-terminal lobe region. K26 participates in a covalent cross-link: Glycyl lysine isopeptide (Lys-Gly) (interchain with G-Cter in SUMO1); alternate. K26 participates in a covalent cross-link: Glycyl lysine isopeptide (Lys-Gly) (interchain with G-Cter in SUMO2); alternate. The disordered stretch occupies residues 31–55 (KPDTNGVIKTNATPEKTDEEEKEDR). An N-terminal helix region spans residues 54-67 (DRAAQSLLNKLIRS). The short motif at 91 to 119 (KSFEELRLKPQLLQGVYAMGFNRPSKIQE) is the Q motif element. ATP-binding positions include Q118 and 137-144 (SQSGTGKT). A Helicase ATP-binding domain is found at 124–294 (MMLAEPPQNL…QKVVPDPNII (171 aa)). The DEAD box motif lies at 241–244 (DEAD). Residues 300–478 (EETLDTIKQY…DLDEIEKIAN (179 aa)) form a C-terminal lobe region. The 169-residue stretch at 305–473 (TIKQYYVLCN…RLDTDDLDEI (169 aa)) folds into the Helicase C-terminal domain. ATP-binding residues include R428 and R431.

It belongs to the DEAD box helicase family. DDX19/DBP5 subfamily.

The protein localises to the cytoplasm. Its subcellular location is the nucleus. The protein resides in the nucleoplasm. The enzyme catalyses ATP + H2O = ADP + phosphate + H(+). Functionally, ATP-dependent RNA helicase involved in mRNA export from the nucleus. Rather than unwinding RNA duplexes, DDX19 functions as a remodeler of ribonucleoprotein particles, whereby proteins bound to nuclear mRNA are dissociated and replaced by cytoplasmic mRNA binding proteins. The chain is ATP-dependent RNA helicase DDX19A (DDX19A) from Bos taurus (Bovine).